The chain runs to 490 residues: Hexokinase (490 aa).

Positions 21–466 (QNLLEHIKHF…SGVGAALIAA (446 aa)) constitute a Hexokinase domain. The interval 75–209 (DGKETGTFLA…GLPIKVAALI (135 aa)) is hexokinase small subdomain. The hexokinase large subdomain stretch occupies residues 210–455 (NDTTGTLIAS…DKVTIHAAED (246 aa)).

Belongs to the hexokinase family. Monomer.

It carries out the reaction a D-hexose + ATP = a D-hexose 6-phosphate + ADP + H(+). The catalysed reaction is D-fructose + ATP = D-fructose 6-phosphate + ADP + H(+). It catalyses the reaction D-glucose + ATP = D-glucose 6-phosphate + ADP + H(+). The protein operates within carbohydrate metabolism; hexose metabolism. It participates in carbohydrate degradation; glycolysis; D-glyceraldehyde 3-phosphate and glycerone phosphate from D-glucose: step 1/4. Its function is as follows. Catalyzes the phosphorylation of hexose, such as D-glucose and D-fructose, to hexose 6-phosphate (D-glucose 6-phosphate and D-fructose 6-phosphate, respectively). Mediates the initial step of glycolysis by catalyzing phosphorylation of D-glucose to D-glucose 6-phosphate. The sequence is that of Hexokinase (hxkA) from Emericella nidulans (strain FGSC A4 / ATCC 38163 / CBS 112.46 / NRRL 194 / M139) (Aspergillus nidulans).